Reading from the N-terminus, the 90-residue chain is Barrier-to-autointegration factor-like protein (90 aa).

In terms of assembly, homodimer. Heterodimerizes with BANF1.

Its subcellular location is the nucleus. It is found in the cytoplasm. Its function is as follows. May play a role in BANF1 regulation and influence tissue-specific roles of BANF1. This is Barrier-to-autointegration factor-like protein (Banf2) from Mus musculus (Mouse).